The sequence spans 288 residues: Diaminopimelate epimerase (288 aa).

Substrate is bound by residues N14 and N67. C76 (proton donor) is an active-site residue. Residues 77–78 (GN), N166, N199, and 217–218 (ER) contribute to the substrate site. Residue C226 is the Proton acceptor of the active site. Position 227–228 (227–228 (GT)) interacts with substrate.

Belongs to the diaminopimelate epimerase family. In terms of assembly, homodimer.

It is found in the cytoplasm. The catalysed reaction is (2S,6S)-2,6-diaminopimelate = meso-2,6-diaminopimelate. Its pathway is amino-acid biosynthesis; L-lysine biosynthesis via DAP pathway; DL-2,6-diaminopimelate from LL-2,6-diaminopimelate: step 1/1. Catalyzes the stereoinversion of LL-2,6-diaminopimelate (L,L-DAP) to meso-diaminopimelate (meso-DAP), a precursor of L-lysine and an essential component of the bacterial peptidoglycan. The protein is Diaminopimelate epimerase of Bacillus mycoides (strain KBAB4) (Bacillus weihenstephanensis).